The following is a 132-amino-acid chain: Small ribosomal subunit protein uS8 (132 aa).

It belongs to the universal ribosomal protein uS8 family. In terms of assembly, part of the 30S ribosomal subunit. Contacts proteins S5 and S12.

In terms of biological role, one of the primary rRNA binding proteins, it binds directly to 16S rRNA central domain where it helps coordinate assembly of the platform of the 30S subunit. The protein is Small ribosomal subunit protein uS8 of Natranaerobius thermophilus (strain ATCC BAA-1301 / DSM 18059 / JW/NM-WN-LF).